The primary structure comprises 210 residues: Redox-sensing transcriptional repressor Rex (210 aa).

The H-T-H motif DNA-binding region spans 17–56 (KYHRYLYELLKNDVDRISSKELSEKIGFTASQIRQDLNCF). Residue 91 to 96 (GAGNIG) participates in NAD(+) binding.

It belongs to the transcriptional regulatory Rex family. Homodimer.

Its subcellular location is the cytoplasm. Functionally, modulates transcription in response to changes in cellular NADH/NAD(+) redox state. This is Redox-sensing transcriptional repressor Rex from Clostridium botulinum (strain Loch Maree / Type A3).